Here is a 140-residue protein sequence, read N- to C-terminus: Fluoride-specific ion channel FluC 1 (140 aa).

A run of 4 helical transmembrane segments spans residues 4 to 24, 32 to 52, 70 to 90, and 99 to 119; these read LYLAVGGFCGAVGRYFLASFI, FPLATWIINLGGCLAMGFILT, TGMLGAFTTFSTFSVETLHLL, and LLYLFASLAGGLICMQTGIFL. Residues Gly74 and Thr77 each coordinate Na(+).

This sequence belongs to the fluoride channel Fluc/FEX (TC 1.A.43) family.

It is found in the cell membrane. It carries out the reaction fluoride(in) = fluoride(out). Na(+) is not transported, but it plays an essential structural role and its presence is essential for fluoride channel function. Fluoride-specific ion channel. Important for reducing fluoride concentration in the cell, thus reducing its toxicity. This is Fluoride-specific ion channel FluC 1 from Moorella thermoacetica (strain ATCC 39073 / JCM 9320).